A 311-amino-acid chain; its full sequence is Methionyl-tRNA formyltransferase (311 aa).

Residue 109-112 coordinates (6S)-5,6,7,8-tetrahydrofolate; that stretch reads SLLP.

It belongs to the Fmt family.

It catalyses the reaction L-methionyl-tRNA(fMet) + (6R)-10-formyltetrahydrofolate = N-formyl-L-methionyl-tRNA(fMet) + (6S)-5,6,7,8-tetrahydrofolate + H(+). Its function is as follows. Attaches a formyl group to the free amino group of methionyl-tRNA(fMet). The formyl group appears to play a dual role in the initiator identity of N-formylmethionyl-tRNA by promoting its recognition by IF2 and preventing the misappropriation of this tRNA by the elongation apparatus. This chain is Methionyl-tRNA formyltransferase, found in Acetivibrio thermocellus (strain ATCC 27405 / DSM 1237 / JCM 9322 / NBRC 103400 / NCIMB 10682 / NRRL B-4536 / VPI 7372) (Clostridium thermocellum).